A 583-amino-acid chain; its full sequence is MPKPINVRVTTMDAELEFAIQPNTTGKQLFDQVVKTVGLREVWFFGLQYVDSKGYSTWLKLNKKVTQQDVKKENPLQFKFRAKFFPEDVSEELIQEITQRLFFLQVKEAILNDEIYCPPETAVLLASYAVQAKYGDYNKEIHKPGYLANDRLLPQRVLEQHKLTKEQWEERIQNWHEEHRGMLREDSIMEYLKIAQDLEMYGVNYFEIKNKKGTELWLGVDALGLNIYEHDDKLTPKIGFPWSEIRNISFNDKKFVIKPIDKKAPDFVFYAPRLRINKRILALCMGNHELYMRRRKPDTIEVQQMKAQAREEKHQKQLERAQLENEKKKREIAEKEKERIEREKEELMERLRQIEEQTMKAQKELEEQTRKALELDQERKRAKEEAERLEKERRAAEEAKSAIAKQAADQMKNQEQLAAELAEFTAKIALLEEAKKKKEEEATEWQHKAFAAQEDLEKTKEELKTVMSAPPPPPPPPVVPPTENEHDEHDENNAEASAELSNDGVMNHRSEEERVTETQKNERVNKQLQALSSELAQARDETKKTQNDVLHAENVKAGRDKYKTLRQIRQGNTKQRIDEFEAM.

The region spanning 5–295 (INVRVTTMDA…GNHELYMRRR (291 aa)) is the FERM domain. An a 1,2-diacyl-sn-glycero-3-phospho-(1D-myo-inositol)-binding site is contributed by 60–63 (KLNK). K83 carries the post-translational modification N6-succinyllysine. K278 contacts a 1,2-diacyl-sn-glycero-3-phospho-(1D-myo-inositol). 3 disordered regions span residues 310 to 336 (REEK…AEKE), 374 to 407 (ELDQ…AKQA), and 458 to 526 (KTKE…RVNK). Positions 374-400 (ELDQERKRAKEEAERLEKERRAAEEAK) are enriched in basic and acidic residues. Residues 469-480 (APPPPPPPPVVP) are compositionally biased toward pro residues. Composition is skewed to basic and acidic residues over residues 483-492 (ENEHDEHDEN) and 506-525 (MNHR…ERVN). A Phosphothreonine; by ROCK2 modification is found at T564.

Interacts with CPNE1 (via VWFA domain) and CPNE4 (via VWFA domain). Binds NHERF1. Interacts with NHERF1, NHERF2, LAYN, MME/NEP and ICAM2. Interacts (via FERM domain) with SPN/CD43 cytoplasmic tail. Interacts with CD44. Interacts with CLIC5; may work together in a complex which also includes EZR and MYO6 to stabilize linkages between the plasma membrane and subjacent actin cytoskeleton at the base of stereocilia. In terms of processing, phosphorylated by tyrosine-protein kinases. Phosphorylation by ROCK2 suppresses the head-to-tail association of the N-terminal and C-terminal halves resulting in an opened conformation which is capable of actin and membrane-binding.

Its subcellular location is the cell membrane. The protein localises to the cytoplasm. It localises to the cytoskeleton. It is found in the cleavage furrow. The protein resides in the cell projection. Its subcellular location is the microvillus. The protein localises to the stereocilium. Its activity is regulated as follows. A head-to-tail association, of the N-terminal and C-terminal halves results in a closed conformation (inactive form) which is incapable of actin or membrane-binding. Its function is as follows. Probably plays a crucial role in the binding of the barbed end of actin filaments to the plasma membrane. The sequence is that of Radixin (RDX) from Sus scrofa (Pig).